The following is a 698-amino-acid chain: Elongation factor G 1 (698 aa).

In terms of domain architecture, tr-type G spans 8-290 (ERYRNIGICA…AVVEFLPAPV (283 aa)). GTP contacts are provided by residues 17 to 24 (AHVDAGKT), 88 to 92 (DTPGH), and 142 to 145 (NKMD).

It belongs to the TRAFAC class translation factor GTPase superfamily. Classic translation factor GTPase family. EF-G/EF-2 subfamily.

It localises to the cytoplasm. Functionally, catalyzes the GTP-dependent ribosomal translocation step during translation elongation. During this step, the ribosome changes from the pre-translocational (PRE) to the post-translocational (POST) state as the newly formed A-site-bound peptidyl-tRNA and P-site-bound deacylated tRNA move to the P and E sites, respectively. Catalyzes the coordinated movement of the two tRNA molecules, the mRNA and conformational changes in the ribosome. This chain is Elongation factor G 1, found in Shewanella sp. (strain MR-4).